The following is a 364-amino-acid chain: sn-glycerol-3-phosphate import ATP-binding protein UgpC (364 aa).

One can recognise an ABC transporter domain in the interval 4-235 (VVLRNVRKTY…PATTFVASFI (232 aa)). An ATP-binding site is contributed by 37–44 (GPSGCGKS).

Belongs to the ABC transporter superfamily. sn-glycerol-3-phosphate importer (TC 3.A.1.1.3) family. As to quaternary structure, the complex is composed of two ATP-binding proteins (UgpC), two transmembrane proteins (UgpA and UgpE) and a solute-binding protein (UgpB).

The protein resides in the cell inner membrane. It catalyses the reaction sn-glycerol 3-phosphate(out) + ATP + H2O = sn-glycerol 3-phosphate(in) + ADP + phosphate + H(+). In terms of biological role, part of the ABC transporter complex UgpBAEC involved in sn-glycerol-3-phosphate (G3P) import. Responsible for energy coupling to the transport system. In Rhodopseudomonas palustris (strain BisB5), this protein is sn-glycerol-3-phosphate import ATP-binding protein UgpC.